The chain runs to 450 residues: Phosphoglucosamine mutase (450 aa).

The active-site Phosphoserine intermediate is the S102. Residues S102, D243, D245, and D247 each coordinate Mg(2+). S102 carries the phosphoserine modification.

Belongs to the phosphohexose mutase family. Mg(2+) serves as cofactor. Post-translationally, activated by phosphorylation.

The enzyme catalyses alpha-D-glucosamine 1-phosphate = D-glucosamine 6-phosphate. Catalyzes the conversion of glucosamine-6-phosphate to glucosamine-1-phosphate. This chain is Phosphoglucosamine mutase, found in Agrobacterium fabrum (strain C58 / ATCC 33970) (Agrobacterium tumefaciens (strain C58)).